A 314-amino-acid chain; its full sequence is RNA 2'-O-methyltransferase FBLL1 (314 aa).

Positions 1-59 (MKPAGGRGGWGWGGGKGGSKGGDTGSGTKGGFGARTRGSSGGGRGRGRGGGGGGGGGGG) are enriched in gly residues. The disordered stretch occupies residues 1–82 (MKPAGGRGGW…RRKKGITVSV (82 aa)). Arginine 7 carries the omega-N-methylarginine modification. Over residues 64–77 (RGGPGKNKNRRKKG) the composition is skewed to basic residues. S-adenosyl-L-methionine-binding positions include 166–167 (TT), 185–186 (EF), 210–211 (DA), and 230–233 (DVAQ).

The protein belongs to the methyltransferase superfamily. Fibrillarin family. In terms of assembly, component of a box C/D small nucleolar ribonucleoprotein (snoRNP) complex composed of FBLL1, SNU13/NHP2L1, NOP56 and NOP58 and a guide snoRNA which mediates 2'-hydroxyl ribose methylation in RNAs.

It localises to the nucleus. The protein localises to the nucleolus. It catalyses the reaction a ribonucleotide in RNA + S-adenosyl-L-methionine = a 2'-O-methylribonucleotide in RNA + S-adenosyl-L-homocysteine + H(+). Functionally, S-adenosyl-L-methionine-dependent RNA methyltransferase that catalyzes 2'-hydroxyl ribose methylation in RNAs. Functions as part of box C/D small nucleolar ribonucleoprotein (snoRNP) complexes, where guide snoRNAs ensure methylation specificity through base pairing with RNA substrates. Exhibits broad substrate specificity, methylating multiple sites on ribosomal RNAs (rRNAs) and messenger RNAs (mRNAs) depending on the guide snoRNA incorporated in the complex. Specifically expressed in brain, it regulates the expression of GAP43 by stabilizing its mRNA through methylation and thereby plays an indirect role in neuronal differentiation. In Mus musculus (Mouse), this protein is RNA 2'-O-methyltransferase FBLL1.